The chain runs to 95 residues: Small ribosomal subunit protein uS17 (95 aa).

Belongs to the universal ribosomal protein uS17 family. As to quaternary structure, part of the 30S ribosomal subunit.

Its function is as follows. One of the primary rRNA binding proteins, it binds specifically to the 5'-end of 16S ribosomal RNA. In Mycoplasmopsis synoviae (strain 53) (Mycoplasma synoviae), this protein is Small ribosomal subunit protein uS17.